Here is a 613-residue protein sequence, read N- to C-terminus: Phosphomethylpyrimidine synthase (613 aa).

Substrate contacts are provided by residues N215, M244, Y273, H309, 329–331 (SRG), 370–373 (DGLR), and E409. A Zn(2+)-binding site is contributed by H413. Y436 contacts substrate. Residue H477 coordinates Zn(2+). [4Fe-4S] cluster contacts are provided by C557, C560, and C565.

Belongs to the ThiC family. As to quaternary structure, homodimer. [4Fe-4S] cluster serves as cofactor.

The catalysed reaction is 5-amino-1-(5-phospho-beta-D-ribosyl)imidazole + S-adenosyl-L-methionine = 4-amino-2-methyl-5-(phosphooxymethyl)pyrimidine + CO + 5'-deoxyadenosine + formate + L-methionine + 3 H(+). The protein operates within cofactor biosynthesis; thiamine diphosphate biosynthesis. Its function is as follows. Catalyzes the synthesis of the hydroxymethylpyrimidine phosphate (HMP-P) moiety of thiamine from aminoimidazole ribotide (AIR) in a radical S-adenosyl-L-methionine (SAM)-dependent reaction. The chain is Phosphomethylpyrimidine synthase from Paramagnetospirillum magneticum (strain ATCC 700264 / AMB-1) (Magnetospirillum magneticum).